We begin with the raw amino-acid sequence, 431 residues long: TDP-daunosamine transferase DnrS (431 aa).

An N-terminal signal peptide occupies residues 1 to 23; it reads MKVLVTAFAMDAHFNGVVPLAWA.

It belongs to the glycosyltransferase 28 family.

It catalyses the reaction dTDP-beta-L-daunosamine + epsilon-rhodomycinone = rhodomycin D + dTDP + H(+). The protein operates within antibiotic biosynthesis; daunorubicin biosynthesis. It functions in the pathway antibiotic biosynthesis; carminomycin biosynthesis. Functionally, involved in the biosynthesis of the anthracyclines carminomycin and daunorubicin (daunomycin) which are aromatic polyketide antibiotics that exhibit high cytotoxicity and are widely applied in the chemotherapy of a variety of cancers. Catalyzes the addition of the TDP activated glycoside, L-daunosamine-TDP (2,3,6-trideoxy-3-aminohexose-TDP) at position C-7 of epsilon-rhodomycinone to yield rhodomycin D. Glycosylation is a prerequisite for biological activity of anthracyclines and requires DnrQ which seems to act as an activator. In Streptomyces peucetius, this protein is TDP-daunosamine transferase DnrS (dnrS).